We begin with the raw amino-acid sequence, 887 residues long: Chaperone protein ClpB 2 (887 aa).

Residues 6-147 (PTKFTDKAWE…AATVKAIRGA (142 aa)) enclose the Clp R domain. 2 repeat regions span residues 9 to 73 (FTDK…ARQQ) and 84 to 147 (CGRS…IRGA). The NBD1 stretch occupies residues 160-342 (AALEKYGRDL…RRFQQVYIGQ (183 aa)). Residue 207–214 (GEPGVGKT) coordinates ATP. The linker stretch occupies residues 343–559 (PSVEDTISIL…IAEIVAKWTG (217 aa)). Positions 393–535 (IDLVDEAAAK…TEAQLLELQA (143 aa)) form a coiled coil. The segment at 569–780 (ERQKLLQLEQ…RIDDVILFHG (212 aa)) is NBD2. Residue 619–626 (GPTGVGKT) participates in ATP binding. The interval 781 to 887 (LGRTELAQIA…TGDRDTVSAS (107 aa)) is C-terminal.

It belongs to the ClpA/ClpB family. In terms of assembly, homohexamer. The oligomerization is ATP-dependent.

Its subcellular location is the cytoplasm. Its function is as follows. Part of a stress-induced multi-chaperone system, it is involved in the recovery of the cell from heat-induced damage, in cooperation with DnaK, DnaJ and GrpE. Acts before DnaK, in the processing of protein aggregates. Protein binding stimulates the ATPase activity; ATP hydrolysis unfolds the denatured protein aggregates, which probably helps expose new hydrophobic binding sites on the surface of ClpB-bound aggregates, contributing to the solubilization and refolding of denatured protein aggregates by DnaK. The sequence is that of Chaperone protein ClpB 2 (clpB2) from Thermosynechococcus vestitus (strain NIES-2133 / IAM M-273 / BP-1).